The chain runs to 336 residues: Holliday junction branch migration complex subunit RuvB (336 aa).

Positions Ala4–Tyr184 are large ATPase domain (RuvB-L). Residues Arg24, Gly65, Lys68, Thr69, Thr70, Glu131–Tyr133, Arg174, Tyr184, and Arg221 each bind ATP. Thr69 lines the Mg(2+) pocket. The interval Asn185 to Asp255 is small ATPAse domain (RuvB-S). Residues Asp258–Ala336 are head domain (RuvB-H). The DNA site is built by Arg294, Arg313, and Arg318.

It belongs to the RuvB family. Homohexamer. Forms an RuvA(8)-RuvB(12)-Holliday junction (HJ) complex. HJ DNA is sandwiched between 2 RuvA tetramers; dsDNA enters through RuvA and exits via RuvB. An RuvB hexamer assembles on each DNA strand where it exits the tetramer. Each RuvB hexamer is contacted by two RuvA subunits (via domain III) on 2 adjacent RuvB subunits; this complex drives branch migration. In the full resolvosome a probable DNA-RuvA(4)-RuvB(12)-RuvC(2) complex forms which resolves the HJ.

It is found in the cytoplasm. The catalysed reaction is ATP + H2O = ADP + phosphate + H(+). Its function is as follows. The RuvA-RuvB-RuvC complex processes Holliday junction (HJ) DNA during genetic recombination and DNA repair, while the RuvA-RuvB complex plays an important role in the rescue of blocked DNA replication forks via replication fork reversal (RFR). RuvA specifically binds to HJ cruciform DNA, conferring on it an open structure. The RuvB hexamer acts as an ATP-dependent pump, pulling dsDNA into and through the RuvAB complex. RuvB forms 2 homohexamers on either side of HJ DNA bound by 1 or 2 RuvA tetramers; 4 subunits per hexamer contact DNA at a time. Coordinated motions by a converter formed by DNA-disengaged RuvB subunits stimulates ATP hydrolysis and nucleotide exchange. Immobilization of the converter enables RuvB to convert the ATP-contained energy into a lever motion, pulling 2 nucleotides of DNA out of the RuvA tetramer per ATP hydrolyzed, thus driving DNA branch migration. The RuvB motors rotate together with the DNA substrate, which together with the progressing nucleotide cycle form the mechanistic basis for DNA recombination by continuous HJ branch migration. Branch migration allows RuvC to scan DNA until it finds its consensus sequence, where it cleaves and resolves cruciform DNA. The protein is Holliday junction branch migration complex subunit RuvB of Shewanella frigidimarina (strain NCIMB 400).